The sequence spans 123 residues: Large ribosomal subunit protein mL52 (123 aa).

The transit peptide at 1 to 23 (MAALGTVLFTGVRRLHCSVAAWA) directs the protein to the mitochondrion. Positions 99 to 109 (QEEQRKQENAL) are enriched in basic and acidic residues. The disordered stretch occupies residues 99 to 123 (QEEQRKQENALKPKGASLKSPLPSQ).

The protein belongs to the mitochondrion-specific ribosomal protein mL52 family. Component of the mitochondrial large ribosomal subunit (mt-LSU). Mature mammalian 55S mitochondrial ribosomes consist of a small (28S) and a large (39S) subunit. The 28S small subunit contains a 12S ribosomal RNA (12S mt-rRNA) and 30 different proteins. The 39S large subunit contains a 16S rRNA (16S mt-rRNA), a copy of mitochondrial valine transfer RNA (mt-tRNA(Val)), which plays an integral structural role, and 52 different proteins. mL52 connects the central protuberance to the body of the ribosome.

The protein localises to the mitochondrion. The polypeptide is Large ribosomal subunit protein mL52 (MRPL52) (Homo sapiens (Human)).